The primary structure comprises 487 residues: Betaine aldehyde dehydrogenase (487 aa).

Residues Ile-27 and Asp-93 each coordinate K(+). NAD(+) is bound at residue Gly-149 to Trp-151. Lys-161 (charge relay system) is an active-site residue. NAD(+) is bound by residues Lys-175–Glu-178 and Ser-228–Thr-231. Leu-243 provides a ligand contact to K(+). Glu-249 functions as the Proton acceptor in the catalytic mechanism. The NAD(+) site is built by Gly-251, Cys-283, and Glu-384. The active-site Nucleophile is the Cys-283. Cys-283 is modified (cysteine sulfenic acid (-SOH)). Lys-454 and Gly-457 together coordinate K(+). Glu-461 acts as the Charge relay system in catalysis.

This sequence belongs to the aldehyde dehydrogenase family. As to quaternary structure, dimer of dimers. Requires K(+) as cofactor.

It carries out the reaction betaine aldehyde + NAD(+) + H2O = glycine betaine + NADH + 2 H(+). It functions in the pathway amine and polyamine biosynthesis; betaine biosynthesis via choline pathway; betaine from betaine aldehyde: step 1/1. In terms of biological role, involved in the biosynthesis of the osmoprotectant glycine betaine. Catalyzes the irreversible oxidation of betaine aldehyde to the corresponding acid. This is Betaine aldehyde dehydrogenase from Brucella canis (strain ATCC 23365 / NCTC 10854 / RM-666).